The primary structure comprises 301 residues: 4-hydroxy-tetrahydrodipicolinate synthase (301 aa).

Position 57 (Thr57) interacts with pyruvate. Tyr145 acts as the Proton donor/acceptor in catalysis. Lys173 (schiff-base intermediate with substrate) is an active-site residue. Residue Ile213 coordinates pyruvate.

The protein belongs to the DapA family. In terms of assembly, homotetramer; dimer of dimers.

The protein localises to the cytoplasm. It carries out the reaction L-aspartate 4-semialdehyde + pyruvate = (2S,4S)-4-hydroxy-2,3,4,5-tetrahydrodipicolinate + H2O + H(+). The protein operates within amino-acid biosynthesis; L-lysine biosynthesis via DAP pathway; (S)-tetrahydrodipicolinate from L-aspartate: step 3/4. Its function is as follows. Catalyzes the condensation of (S)-aspartate-beta-semialdehyde [(S)-ASA] and pyruvate to 4-hydroxy-tetrahydrodipicolinate (HTPA). The sequence is that of 4-hydroxy-tetrahydrodipicolinate synthase from Corynebacterium diphtheriae (strain ATCC 700971 / NCTC 13129 / Biotype gravis).